The primary structure comprises 107 residues: Iron-binding protein IscA (107 aa).

Residues Cys-35, Cys-99, and Cys-101 each contribute to the Fe cation site.

The protein belongs to the HesB/IscA family. In terms of assembly, homodimer; may form tetramers and higher multimers. Fe cation is required as a cofactor.

Its function is as follows. Is able to transfer iron-sulfur clusters to apo-ferredoxin. Multiple cycles of [2Fe2S] cluster formation and transfer are observed, suggesting that IscA acts catalytically. Recruits intracellular free iron so as to provide iron for the assembly of transient iron-sulfur cluster in IscU in the presence of IscS, L-cysteine and the thioredoxin reductase system TrxA/TrxB. The chain is Iron-binding protein IscA from Pectobacterium atrosepticum (strain SCRI 1043 / ATCC BAA-672) (Erwinia carotovora subsp. atroseptica).